We begin with the raw amino-acid sequence, 194 residues long: Imidazoleglycerol-phosphate dehydratase (194 aa).

This sequence belongs to the imidazoleglycerol-phosphate dehydratase family.

It localises to the cytoplasm. It catalyses the reaction D-erythro-1-(imidazol-4-yl)glycerol 3-phosphate = 3-(imidazol-4-yl)-2-oxopropyl phosphate + H2O. The protein operates within amino-acid biosynthesis; L-histidine biosynthesis; L-histidine from 5-phospho-alpha-D-ribose 1-diphosphate: step 6/9. The protein is Imidazoleglycerol-phosphate dehydratase of Listeria monocytogenes serotype 4a (strain HCC23).